The sequence spans 835 residues: MKVLALRHSVAQVYADTQTYLHDDSKDEYENAFLISNLTTHNILYLNYSLKTLKILNKSGIAAVEVQSPDELFALIRCNFTYDYENNIIYLHDYSYYTNNEIRTDQHWITKTDIIDYLLPGWKLTYVGYNGKNTRGHYNFSFSCQNAATDDDIIIEYIYSNELDFQNFLLRKIKERMTTSLPIARLSNRVFRDKLFPSIVNIYKKVINVGPRNESMFTFLNFPTIKQFSNGAYIVKHTIKLKQEKWLGKRVSQFDIGQYKNMLNVVTTIYYYYNLYHSKPIIYMLGSAPSYWIHDIKQYSDFTFETWDPLDTPYSTIHHKELFFDKDVNKLKDNSVLYIDIRTDRKNMDWKEWRKVVEQQTVNNLNIAYKYLSTGKAKVCCVKLTAMDLELPITAKLLHHPTTEVRSEFYAILDAWDIITIKRFIPKGVFYAFINNITTENVFIQPPFKLKASPTDYIVALYALSNDFNSRQDVINLINKQKQSLITVRMNNTFKDEPKVNFKNIYDWTFLPTDFELKDSIITSYDGCLGMFGLSISLSSKPTGNNHLFIINGTDKYYKLDQYANHMGISRRSHQIRFSESATSYSGYIFRDLSNNNFNLIGTNVENSVSGHVYNALIYYRYNYAFDLKRWIYLHSIGKVTVEGGRYYEHAPIELIYACRSAKEFAILQDDLTVLRYANEIEGYINKVYSITYADDPNYFIGIKFNSIPYEYDVKVPHLTLGVLFISDNMIHDVVTVLKKMKTELFKTEISTSYTYMLSDNIYVANASGVLSTYFKLYNMFYRNHITFGQSRMFIPHITLSFSNKQTVRIESTRLKINSIYLRKIKGETVFDMSE.

The segment at 171–245 (RKIKERMTTS…KHTIKLKQEK (75 aa)) is N7-methyltransferase activity. The interval 246 to 428 (WLGKRVSQFD…ITIKRFIPKG (183 aa)) is 2'-O-methyltransferase activity. The tract at residues 429–555 (VFYAFINNIT…NHLFIINGTD (127 aa)) is N7-methyltransferase activity. A GTase/RTPase activity region spans residues 556–692 (KYYKLDQYAN…GYINKVYSIT (137 aa)). The segment at 693 to 835 (YADDPNYFIG…KGETVFDMSE (143 aa)) is 2'-5'-phosphodiesterase activity. Active-site for 2'-5'-phosphodiesterase activity residues include H718, T720, H797, and T799.

This sequence belongs to the rotavirus VP3 family. As to quaternary structure, interacts with VP1. Interacts with VP2.

Its subcellular location is the virion. The catalysed reaction is a 5'-end diphospho-ribonucleoside in mRNA + GTP + H(+) = a 5'-end (5'-triphosphoguanosine)-ribonucleoside in mRNA + diphosphate. The enzyme catalyses a 5'-end (5'-triphosphoguanosine)-ribonucleoside in mRNA + S-adenosyl-L-methionine = a 5'-end (N(7)-methyl 5'-triphosphoguanosine)-ribonucleoside in mRNA + S-adenosyl-L-homocysteine. It catalyses the reaction 5'-triphosphoadenylyl-(2'-&gt;5')-adenylyl-(2'-&gt;5')-adenosine + 2 H2O = 2 AMP + ATP + 2 H(+). Functionally, multifunctional enzyme involved in mRNA capping. Catalyzes the formation of the 5' cap structure on the viral plus-strand transcripts. Specifically binds to GTP and displays guanylyltransferase and methyltransferase activities. Has affinity for ssRNA but not for dsRNA. Capping activity is non-specific and caps RNAs that initiate with either a G or an A residue. Together with VP1 polymerase, forms a VP1-VP3 complex positioned near the channels situated at each of the five-fold vertices of the core. Following infection, the outermost layer of the virus is lost, leaving a double-layered particle (DLP) made up of the core and VP6 shell. VP1 then catalyzes the transcription of fully conservative plus-strand genomic RNAs that are capped by VP3 and extruded through the DLP's channels into the cytoplasm where they function as mRNAs for translation of viral proteins. DLPs probably have an RNA triphosphatase activity as well, whereas open cores do not. Its function is as follows. Counteracts the host innate immune response thanks to its phosphodiesterase that degrades the 5'-triphosphorylated, 2'-5' linked adenylate oligomers produced by the host cell IFN-inducible 2',5'-oligoadenylate synthetase (OAS). The host RNaseL is therefore not activated. The sequence is that of Protein VP3 from Homo sapiens (Human).